The following is a 314-amino-acid chain: MRALVTGAAGFIGSTLVDRLLADGHSVVGLDNFATGRATNLEHLADNSAHVFVEADIVTADLHAILEQHRPEVVFHLAAQIDVRRSVADPQFDAAVNVIGTVRLAEAARQTGVRKIVHTSSGGSIYGTPPEYPTPETAPTDPASPYAAGKVAGEIYLNTFRHLYGLDCSHIAPANVYGPRQDPHGEAGVVAIFAQALLSGKPTRVFGDGTNTRDYVFVDDVVDAFVRVSADVGGGLRFNIGTGKETSDRQLHSAVAAAVGGPDDPEFHPPRLGDLKRSCLDIGLAERVLGWRPQIELADGVRRTVEYFRHKHTD.

NAD(+) contacts are provided by residues 11–12 (FI), 31–36 (DNFATG), 56–57 (DI), and 77–81 (LAAQI). S121 and Y146 together coordinate substrate. Y146 and K150 together coordinate NAD(+). Y146 acts as the Proton acceptor in catalysis. Residues N175, 189–190 (VV), 204–206 (RVF), R213, and 271–274 (RLGD) each bind substrate.

This sequence belongs to the NAD(P)-dependent epimerase/dehydratase family. In terms of assembly, homodimer. It depends on NAD(+) as a cofactor.

The catalysed reaction is UDP-alpha-D-glucose = UDP-alpha-D-galactose. Its pathway is carbohydrate metabolism; galactose metabolism. Involved in the metabolism of galactose. Catalyzes the conversion of UDP-galactose (UDP-Gal) to UDP-glucose (UDP-Glc) through a mechanism involving the transient reduction of NAD. The protein is UDP-glucose 4-epimerase (galE1) of Mycobacterium tuberculosis (strain CDC 1551 / Oshkosh).